The primary structure comprises 234 residues: Covalently-linked cell wall protein 14 (234 aa).

The signal sequence occupies residues 1–22 (MASFLKISTLIAIVSTLQTTLA). Positions 23 to 109 (APPACLLACV…SSEESSASAS (87 aa)) constitute a CFEM domain. Cystine bridges form between C27-C66, C31-C61, C41-C49, and C51-C82. Heme is bound at residue D46. Low complexity predominate over residues 86–207 (SSQSSSSESE…ASSSESTTAT (122 aa)). The interval 86–208 (SSQSSSSESE…SSSESTTATG (123 aa)) is disordered. G215 carries GPI-anchor amidated glycine lipidation. Residues 216–234 (SAAKVGLGALVGLVGAVLL) constitute a propeptide, removed in mature form.

The protein belongs to the CCW14 family. Post-translationally, the GPI-anchor is attached to the protein in the endoplasmic reticulum and serves to target the protein to the cell surface. There, the glucosamine-inositol phospholipid moiety is cleaved off and the GPI-modified mannoprotein is covalently attached via its lipidless GPI glycan remnant to the 1,6-beta-glucan of the outer cell wall layer.

It is found in the secreted. Its subcellular location is the cell wall. The protein localises to the membrane. Beta-glucan associated cell wall protein involved in cell wall structure. May serve as cross-linking or coat-forming wall protein. This Candida albicans (strain SC5314 / ATCC MYA-2876) (Yeast) protein is Covalently-linked cell wall protein 14 (SSR1).